A 356-amino-acid chain; its full sequence is S-adenosylmethionine:tRNA ribosyltransferase-isomerase (356 aa).

This sequence belongs to the QueA family. In terms of assembly, monomer.

It localises to the cytoplasm. It catalyses the reaction 7-aminomethyl-7-carbaguanosine(34) in tRNA + S-adenosyl-L-methionine = epoxyqueuosine(34) in tRNA + adenine + L-methionine + 2 H(+). The protein operates within tRNA modification; tRNA-queuosine biosynthesis. Its function is as follows. Transfers and isomerizes the ribose moiety from AdoMet to the 7-aminomethyl group of 7-deazaguanine (preQ1-tRNA) to give epoxyqueuosine (oQ-tRNA). The polypeptide is S-adenosylmethionine:tRNA ribosyltransferase-isomerase (Escherichia coli O81 (strain ED1a)).